Reading from the N-terminus, the 274-residue chain is 2,3,4,5-tetrahydropyridine-2,6-dicarboxylate N-succinyltransferase (274 aa).

Arginine 107 and aspartate 144 together coordinate substrate.

This sequence belongs to the transferase hexapeptide repeat family. Homotrimer.

Its subcellular location is the cytoplasm. It carries out the reaction (S)-2,3,4,5-tetrahydrodipicolinate + succinyl-CoA + H2O = (S)-2-succinylamino-6-oxoheptanedioate + CoA. It participates in amino-acid biosynthesis; L-lysine biosynthesis via DAP pathway; LL-2,6-diaminopimelate from (S)-tetrahydrodipicolinate (succinylase route): step 1/3. The polypeptide is 2,3,4,5-tetrahydropyridine-2,6-dicarboxylate N-succinyltransferase (Cereibacter sphaeroides (strain ATCC 17029 / ATH 2.4.9) (Rhodobacter sphaeroides)).